The following is a 347-amino-acid chain: Probable E3 ubiquitin-protein ligase DTX3 (347 aa).

Residues 111–157 (GGEHPELHRPGPPPLRAAPLLPPGARGLPPPPPPLPPPLPPRLREDA) are disordered. Residues 120-151 (PGPPPLRAAPLLPPGARGLPPPPPPLPPPLPP) are compositionally biased toward pro residues. Residues 164–205 (CPICLGEIQNAKTLEKCRHSFCEGCITRALQVKKACPMCGRF) form an RING-type zinc finger.

The protein belongs to the Deltex family. As to quaternary structure, homodimer. May form a heterodimer with other members of the Deltex family. Interacts with NOTCH1. In terms of tissue distribution, strongly expressed in testis and brain. Weakly expressed in kidney.

Its subcellular location is the cytoplasm. The enzyme catalyses S-ubiquitinyl-[E2 ubiquitin-conjugating enzyme]-L-cysteine + [acceptor protein]-L-lysine = [E2 ubiquitin-conjugating enzyme]-L-cysteine + N(6)-ubiquitinyl-[acceptor protein]-L-lysine.. It participates in protein modification; protein ubiquitination. Functionally, regulator of Notch signaling, a signaling pathway involved in cell-cell communications that regulates a broad spectrum of cell-fate determinations. Probably acts both as a positive and negative regulator of Notch, depending on the developmental and cell context. Functions as a ubiquitin ligase protein in vitro, suggesting that it may regulate the Notch pathway via some ubiquitin ligase activity. The protein is Probable E3 ubiquitin-protein ligase DTX3 (Dtx3) of Mus musculus (Mouse).